Here is a 494-residue protein sequence, read N- to C-terminus: Alpha-amylase (494 aa).

The N-terminal stretch at 1–26 (MQISKAALLASLAALVYAQPVTLFKR) is a signal peptide. C57 and C65 are joined by a disulfide. W110 is a substrate binding site. N148 serves as a coordination point for Ca(2+). H149 provides a ligand contact to substrate. A disulfide bridge connects residues C177 and C191. Ca(2+) is bound at residue D202. N-linked (GlcNAc...) asparagine glycosylation occurs at N224. R231 lines the substrate pocket. Ca(2+) contacts are provided by D233, H237, and E257. D233 acts as the Nucleophile in catalysis. Residue 236-237 (KH) participates in substrate binding. The active-site Proton donor is E257. G261 contacts substrate. An intrachain disulfide couples C267 to C310. The substrate site is built by D324 and R371. C462 and C493 form a disulfide bridge.

It belongs to the glycosyl hydrolase 13 family. The cofactor is Ca(2+).

It is found in the secreted. It catalyses the reaction Endohydrolysis of (1-&gt;4)-alpha-D-glucosidic linkages in polysaccharides containing three or more (1-&gt;4)-alpha-linked D-glucose units.. This is Alpha-amylase (ALP1) from Saccharomycopsis fibuligera (Yeast).